The chain runs to 161 residues: Nucleotide-binding protein PSEEN4469 (161 aa).

This sequence belongs to the YajQ family.

Nucleotide-binding protein. This chain is Nucleotide-binding protein PSEEN4469, found in Pseudomonas entomophila (strain L48).